The following is a 302-amino-acid chain: Thioredoxin-like protein CDSP32, chloroplastic (302 aa).

Residues 1–56 (MATVANFLAKPISTVVPRPSSAVASTSSFVFFNHKTNPLFRRKNLPKRLFSAVKIK) constitute a chloroplast transit peptide. The Thioredoxin domain occupies 163–298 (HEEEGIEPDQ…IGEILRYSGV (136 aa)). Catalysis depends on nucleophile residues Cys219 and Cys222. A disulfide bridge connects residues Cys219 and Cys222.

The protein belongs to the thioredoxin family. Interacts with the plastidial peroxiredoxin BAS1.

The protein resides in the plastid. Its subcellular location is the chloroplast stroma. Its function is as follows. Probable thiol-disulfide oxidoreductase involved in resistance to oxidative stress. May participate in the reduction of alkyl hydroperoxides derived from oxidative stress by acting as a physiological electron donor to the BAS1 peroxiredoxin. May regenerate methionine sulfoxide reductase B1 (MSRB1) activity through sulfenic acid reduction. The polypeptide is Thioredoxin-like protein CDSP32, chloroplastic (CDSP32) (Arabidopsis thaliana (Mouse-ear cress)).